The primary structure comprises 1378 residues: DNA-directed RNA polymerase subunit beta (1378 aa).

The protein belongs to the RNA polymerase beta chain family. As to quaternary structure, the RNAP catalytic core consists of 2 alpha, 1 beta, 1 beta' and 1 omega subunit. When a sigma factor is associated with the core the holoenzyme is formed, which can initiate transcription.

The enzyme catalyses RNA(n) + a ribonucleoside 5'-triphosphate = RNA(n+1) + diphosphate. Functionally, DNA-dependent RNA polymerase catalyzes the transcription of DNA into RNA using the four ribonucleoside triphosphates as substrates. In Sorangium cellulosum (strain So ce56) (Polyangium cellulosum (strain So ce56)), this protein is DNA-directed RNA polymerase subunit beta.